The following is a 736-amino-acid chain: MNHSPQSARPVSIMRRFLDSEAAGGITLMAAAALALIVANSPFAQTYFDALHLYIGPLSLAHWINDALMAIFFLLVGLEIKREMLDGQLASWPNRMLPGIAAAGGVILPAIIFAVLNHDNPAKLRGWAVPSATDIAFALGVLSLLGSRAPSSLKVFLATLAILDDLAAVVIIAIFYTAEISMPYLGAAFITAAVLFVMNRMGVVKLLPYLISAVILWFFVFNSGVHATVAGVVAALMIPLKPAPGRPDDMTSPLHKLEHALAKPVAFIVVPIFGFANAGISFKGLEASVLGDTLTLGILLGLFLGKQFGVFGAAWLAIKTGLAEKPMGASWVQLYGVAILCGIGFTMSIFIGLLSFPSDLMQTETKIGVLSGSALSAICGYLLLRAARPDQSAANPLWKADESPEAKNFGRFLCVFHFASYIASTYCTERLQAASSLLRRSSLEFALPGLLKRLIPRRFRAVETEIPVVRLHGAIMTGGTSLRPTLSLASTAGILEKAFADKHAPAVAISINSPGGAPVQSRLIYRRIRDLAVEHQKKVFVFVEDVAASGGYMIALAGDEIIADPSSIVGSIGVVSASFGFPELLKKIGVERRVYTAGSNKVTLDPFQPEKAEDIERLKALQLEIHATFIDMVKERRAGKLGDNPDLFSGLFWTGTTAASLGLIDGLGDMRSFLRKTYGDKVKLKLIQPQRGLLGRKLPGIGMDSGSVEPAQIAAHLGDGLLCVAEEKAIWARYGL.

A na(+)/H(+) antiporter NhaA region spans residues 1 to 387; the sequence is MNHSPQSARP…ICGYLLLRAA (387 aa). Helical transmembrane passes span 23–43, 58–78, 96–116, 126–146, 155–175, 178–198, 201–221, 224–244, 265–285, 298–318, 334–354, and 367–387; these read AGGI…NSPF, LSLA…LVGL, MLPG…FAVL, GWAV…SLLG, VFLA…IAIF, AEIS…LFVM, MGVV…FFVF, GVHA…KPAP, VAFI…FKGL, ILLG…WLAI, LYGV…IGLL, and IGVL…LRAA. The peptidase S49 stretch occupies residues 388-736; that stretch reads RPDQSAANPL…EKAIWARYGL (349 aa).

In the N-terminal section; belongs to the NhaA Na(+)/H(+) (TC 2.A.33) antiporter family. It in the C-terminal section; belongs to the peptidase S49 family.

The protein resides in the cell inner membrane. It catalyses the reaction Na(+)(in) + 2 H(+)(out) = Na(+)(out) + 2 H(+)(in). In terms of biological role, na(+)/H(+) antiporter that extrudes sodium in exchange for external protons. The sequence is that of Na(+)/H(+) antiporter NhaA from Brucella abortus (strain 2308).